The following is a 658-amino-acid chain: MSLNFNQKNAIELINGPCLILAGAGSGKTKVIINKIIYLINNCQYKPGNIIAVTFTNKAAHEIKVRLAKHLNLLQIKKMIISTFHSLGLEIIKKEINTLKFNSNFSLFDERDQMMLLKKICSKSIKNDTKLLKKLVFMISFWKNKFLTPLQVQLSAQSNLEKDFAFFYKQYTFHLRKSNILDFDDLICIPTSLLKNNQIIQNRWQKKISYLLVDEYQDTNNSQYELIKMLTNVNSNFTLVGDDDQSIYSWRGAKPQNLFLIKKDFPNLKIIKMEQNYRSYGRILKAANKLISNNLHYFKKKLFSNLEYGNKIKVIIGKNEKNEAEKIADKIIHECSNDIMQYKDYAILYRGNYQSQILEKTFLKKNIPYDISTNSSFFSRPEIKDLLSYLRLIVNPDDNHAFIRILNIPHRQIGLTTLNKLEELASKKNKSLFQISNDIEIKKILRERTVKKIKDFIYWIKKIIKLSLLKEDIILDKIINDIKYELWLTKILKEPKKIKTSINNIYTLSNWLKEMLRGNEFEKPMNLLQIVKKMTLRDILEKKIQINEIPKNRVQLMTLHSSKGLEFSSVFIIGMNEGILPNIKSINNDNIEEERRLTYVGMTRARKELFFTYCQTRIQYGQKLYTAPSRFLFELPQEDLQWEKDDYLDAFHTKEKKI.

One can recognise a UvrD-like helicase ATP-binding domain in the interval 1–280; the sequence is MSLNFNQKNA…IKMEQNYRSY (280 aa). Residues 22 to 29 and Arg278 each bind ATP; that span reads AGAGSGKT. The region spanning 281–564 is the UvrD-like helicase C-terminal domain; sequence GRILKAANKL…QLMTLHSSKG (284 aa).

It belongs to the helicase family. UvrD subfamily. As to quaternary structure, homodimer.

It catalyses the reaction Couples ATP hydrolysis with the unwinding of duplex DNA by translocating in the 3'-5' direction.. The enzyme catalyses ATP + H2O = ADP + phosphate + H(+). Functionally, rep helicase is a single-stranded DNA-dependent ATPase involved in DNA replication; it can initiate unwinding at a nick in the DNA. It binds to the single-stranded DNA and acts in a progressive fashion along the DNA in the 3' to 5' direction. The polypeptide is ATP-dependent DNA helicase Rep (Buchnera aphidicola subsp. Schizaphis graminum (strain Sg)).